The chain runs to 78 residues: Small ribosomal subunit protein uS15c (78 aa).

Belongs to the universal ribosomal protein uS15 family. In terms of assembly, part of the 30S ribosomal subunit.

The protein localises to the plastid. Its subcellular location is the chloroplast. The polypeptide is Small ribosomal subunit protein uS15c (rps15-A) (Saccharum officinarum (Sugarcane)).